Reading from the N-terminus, the 130-residue chain is Cyclin-dependent kinase 4 inhibitor B (130 aa).

ANK repeat units follow at residues 5 to 34, 38 to 66, 71 to 100, and 104 to 130; these read SSDA…DPNA, FGRR…EPNC, TLTR…RLDV, and WGRL…ATGD. Phosphothreonine is present on Thr12.

This sequence belongs to the CDKN2 cyclin-dependent kinase inhibitor family. In terms of assembly, heterodimer of CDKN2B with CDK4 or CDK6. In terms of tissue distribution, expressed ubiquitously.

Its function is as follows. Interacts strongly with CDK4 and CDK6. Potent inhibitor. Potential effector of TGF-beta induced cell cycle arrest. This Mus musculus (Mouse) protein is Cyclin-dependent kinase 4 inhibitor B (Cdkn2b).